Here is a 541-residue protein sequence, read N- to C-terminus: Chaperonin GroEL 2 (541 aa).

Residues 29 to 32 (TLGP) and 86 to 90 (DGTTT) each bind ATP. Lys132 participates in a covalent cross-link: Isoglutamyl lysine isopeptide (Lys-Gln) (interchain with Q-Cter in protein Pup). Residues Gly413, 476 to 478 (NAA), and Asp492 each bind ATP.

Belongs to the chaperonin (HSP60) family. As to quaternary structure, forms a cylinder of 14 subunits composed of two heptameric rings stacked back-to-back. Interacts with the co-chaperonin GroES.

It localises to the secreted. Its subcellular location is the capsule. The protein resides in the cell surface. The protein localises to the cell wall. It carries out the reaction ATP + H2O + a folded polypeptide = ADP + phosphate + an unfolded polypeptide.. Its function is as follows. Together with its co-chaperonin GroES, plays an essential role in assisting protein folding. The GroEL-GroES system forms a nano-cage that allows encapsulation of the non-native substrate proteins and provides a physical environment optimized to promote and accelerate protein folding. This Mycolicibacterium smegmatis (strain ATCC 700084 / mc(2)155) (Mycobacterium smegmatis) protein is Chaperonin GroEL 2.